The primary structure comprises 193 residues: Ferredoxin-2, mitochondrial (193 aa).

The disordered stretch occupies residues 38–70 (QATPEKLETSNEEEGSSSAQITAGVESDAENQR). Residues 78-180 (VEVVFLDRSG…GAEFTLPKIT (103 aa)) enclose the 2Fe-2S ferredoxin-type domain. [2Fe-2S] cluster-binding residues include Cys-115, Cys-121, Cys-124, and Cys-161.

Belongs to the adrenodoxin/putidaredoxin family. Component of the mitochondrial core iron-sulfur cluster (ISC) complex composed of NFS1, LYRM4, NDUFAB1, ISCU, FXN, and FDX2; this complex is a heterohexamer containing two copies of each monomer. The cofactor is [2Fe-2S] cluster.

The protein resides in the mitochondrion. It is found in the mitochondrion matrix. Its function is as follows. Electron donor, of the core iron-sulfur cluster (ISC) assembly complex, that acts to reduce the persulfide into sulfide during [2Fe-2S] clusters assembly on the scaffolding protein ISCU. The core iron-sulfur cluster (ISC) assembly complex is involved in the de novo synthesis of a [2Fe-2S] cluster, the first step of the mitochondrial iron-sulfur protein biogenesis. This process is initiated by the cysteine desulfurase complex (NFS1:LYRM4:NDUFAB1) that produces persulfide which is delivered on the scaffold protein ISCU in a FXN-dependent manner. Then this complex is stabilized by FDX2 which provides reducing equivalents to accomplish the [2Fe-2S] cluster assembly. Finally, the [2Fe-2S] cluster is transferred from ISCU to chaperone proteins, including HSCB, HSPA9 and GLRX5. Essential for coenzyme Q biosynthesis: together with FDXR, transfers the electrons required for the hydroxylation reaction performed by COQ6. This Xenopus laevis (African clawed frog) protein is Ferredoxin-2, mitochondrial.